Consider the following 88-residue polypeptide: U1-hexatoxin-Iw1c (88 aa).

A signal peptide spans 1 to 17 (LKFVVLICLVIMASTSA). A Pyrrolidone carboxylic acid modification is found at Q18. 5 cysteine pairs are disulfide-bonded: C20/C31, C25/C39, C30/C65, C49/C73, and C67/C80. Positions 86–88 (RSE) are excised as a propeptide.

The protein belongs to the MIT-like AcTx family. Expressed by the venom gland.

It localises to the secreted. This Illawarra wisharti (Illawarra funnel-web spider) protein is U1-hexatoxin-Iw1c.